A 55-amino-acid chain; its full sequence is Accessory gland-specific peptide 70A (55 aa).

Residues 1–19 (MKTLSVFLVLVCLLGLVQS) form the signal peptide. A hydroxyproline mark is found at P28, P32, P34, and P38. A disulfide bond links C43 and C55.

As to expression, main cells of the accessory glands of males (paragonial gland).

It is found in the secreted. Represses female sexual receptivity and stimulates oviposition. In Drosophila sechellia (Fruit fly), this protein is Accessory gland-specific peptide 70A (Acp70A).